The chain runs to 303 residues: Mitochondrial carrier homolog 2 (303 aa).

Ala2 carries the N-acetylalanine modification. Over 2 to 15 the chain is Mitochondrial intermembrane; sequence ADAASQVLLGSGLT. Solcar repeat units follow at residues 2-98 and 118-206; these read ADAA…YQES and DRVI…INTY. A helical transmembrane segment spans residues 16 to 36; the sequence is ILSQPLMYVKVLIQVGYEPLP. Over 37-77 the chain is Cytoplasmic; sequence PTIGRNIFGRQVCQLPGLFCYAQHIASIDGRRGLFTGLTPR. Residues 78–92 form a helical membrane-spanning segment; sequence LCSGVLGTVVHGKVL. Topologically, residues 93 to 135 are mitochondrial intermembrane; it reads QYYQESEKPEELGSVTVQKEYSSSFDRVIKETTREMIARSAAT. Residues 136 to 156 traverse the membrane as a helical segment; the sequence is LITHPFHVITLRSMVQFIGRE. The Cytoplasmic segment spans residues 157-180; sequence SKYCGLCDSIVTIYREEGIVGFFA. The chain crosses the membrane as a helical span at residues 181-199; the sequence is GLIPRLLGDIISLWLCNSL. At 200-231 the chain is on the mitochondrial intermembrane side; it reads AYLINTYALDSGVSTMNEMKSYSQAVTGFFAS. Residues 232–252 traverse the membrane as a helical segment; sequence MLTYPFVLVSNLMAVNNCGLA. Topologically, residues 253-280 are cytoplasmic; that stretch reads GGSPPYSPIYTSWIDCWCMLQKAGNMSR. A helical transmembrane segment spans residues 281 to 303; that stretch reads GNSLFFRKVPCGKTYCYDLRMLI.

This sequence belongs to the mitochondrial carrier (TC 2.A.29) family. Interacts with p15BID. Expressed in a wide variety of tissues. Predominant expressed in liver, kidney, heart, skeletal muscle and testis.

Its subcellular location is the mitochondrion outer membrane. In terms of biological role, protein insertase that mediates insertion of transmembrane proteins into the mitochondrial outer membrane. Catalyzes insertion of proteins with alpha-helical transmembrane regions, such as signal-anchored, tail-anchored and multi-pass membrane proteins. Does not mediate insertion of beta-barrel transmembrane proteins. Also acts as a receptor for the truncated form of pro-apoptotic BH3-interacting domain death agonist (p15 BID) and has therefore a critical function in apoptosis. Regulates the quiescence/cycling of hematopoietic stem cells (HSCs). Acts as a regulator of mitochondrial fusion, essential for the naive-to-primed interconversion of embryonic stem cells (ESCs). Acts as a regulator of lipid homeostasis and has a regulatory role in adipocyte differentiation and biology. The polypeptide is Mitochondrial carrier homolog 2 (Mus musculus (Mouse)).